We begin with the raw amino-acid sequence, 306 residues long: 26S proteasome regulatory subunit RPN11 (306 aa).

Positions 27-162 constitute an MPN domain; it reads VYISSIALLK…IDAFRLIDTG (136 aa). Residues H109, H111, and D122 each coordinate Zn(2+). The JAMM motif signature appears at 109–122; sequence HSHPGFGCWLSSVD.

The protein belongs to the peptidase M67A family.

Its function is as follows. Acts as a regulatory subunit of the 26 proteasome which is involved in the ATP-dependent degradation of ubiquitinated proteins. The chain is 26S proteasome regulatory subunit RPN11 (RPN11) from Candida glabrata (strain ATCC 2001 / BCRC 20586 / JCM 3761 / NBRC 0622 / NRRL Y-65 / CBS 138) (Yeast).